A 283-amino-acid polypeptide reads, in one-letter code: Polyamine aminopropyltransferase (283 aa).

The 237-residue stretch at 5-241 (NNWYIEHFER…GWWSVTMARK (237 aa)) folds into the PABS domain. Glutamine 35 lines the S-methyl-5'-thioadenosine pocket. Residues histidine 66 and aspartate 90 each contribute to the spermidine site. S-methyl-5'-thioadenosine contacts are provided by residues aspartate 110 and 141–142 (DG). Aspartate 160 (proton acceptor) is an active-site residue. 160-163 (DSTD) provides a ligand contact to spermidine. Proline 167 contributes to the S-methyl-5'-thioadenosine binding site.

The protein belongs to the spermidine/spermine synthase family. As to quaternary structure, homodimer or homotetramer.

The protein localises to the cytoplasm. It catalyses the reaction S-adenosyl 3-(methylsulfanyl)propylamine + putrescine = S-methyl-5'-thioadenosine + spermidine + H(+). Its pathway is amine and polyamine biosynthesis; spermidine biosynthesis; spermidine from putrescine: step 1/1. In terms of biological role, catalyzes the irreversible transfer of a propylamine group from the amino donor S-adenosylmethioninamine (decarboxy-AdoMet) to putrescine (1,4-diaminobutane) to yield spermidine. The chain is Polyamine aminopropyltransferase from Stenotrophomonas maltophilia (strain K279a).